We begin with the raw amino-acid sequence, 277 residues long: Urease accessory protein UreD (277 aa).

Belongs to the UreD family. As to quaternary structure, ureD, UreF and UreG form a complex that acts as a GTP-hydrolysis-dependent molecular chaperone, activating the urease apoprotein by helping to assemble the nickel containing metallocenter of UreC. The UreE protein probably delivers the nickel.

It is found in the cytoplasm. Required for maturation of urease via the functional incorporation of the urease nickel metallocenter. This is Urease accessory protein UreD from Flavobacterium johnsoniae (strain ATCC 17061 / DSM 2064 / JCM 8514 / BCRC 14874 / CCUG 350202 / NBRC 14942 / NCIMB 11054 / UW101) (Cytophaga johnsonae).